The following is a 151-amino-acid chain: Cyanate hydratase (151 aa).

Catalysis depends on residues R92, E95, and S118.

This sequence belongs to the cyanase family.

The catalysed reaction is cyanate + hydrogencarbonate + 3 H(+) = NH4(+) + 2 CO2. In terms of biological role, catalyzes the reaction of cyanate with bicarbonate to produce ammonia and carbon dioxide. This Coprinopsis cinerea (strain Okayama-7 / 130 / ATCC MYA-4618 / FGSC 9003) (Inky cap fungus) protein is Cyanate hydratase.